The following is a 457-amino-acid chain: Tubulin gamma-2 chain (457 aa).

142 to 148 serves as a coordination point for GTP; that stretch reads AGGTGSG.

This sequence belongs to the tubulin family. As to quaternary structure, interacts with Ote. In terms of tissue distribution, expressed in nurse cells and oocytes of developing egg chambers.

The protein localises to the cytoplasm. It is found in the cytoskeleton. It localises to the microtubule organizing center. Its subcellular location is the centrosome. The protein resides in the spindle. Its function is as follows. Tubulin is the major constituent of microtubules. The gamma chain is found at microtubule organizing centers (MTOC) such as the spindle poles or the centrosome, suggesting that it is involved in the minus-end nucleation of microtubule assembly. Required for oocyte activation and consequently for organization of the female meiotic spindle. Essential for centrosome organization and assembly of biastral mitotic spindles in embryos. Plays a role in stabilizing the augmin complex on the meiotic spindle. The sequence is that of Tubulin gamma-2 chain (gammaTub37C) from Drosophila melanogaster (Fruit fly).